The sequence spans 134 residues: Acyl carrier protein, chloroplastic (134 aa).

The transit peptide at 1–51 directs the protein to the chloroplast; the sequence is MSTTFCSSVSMQATSLAATTRISFQKPGLVSRTNLSFNLRRSIPTRLSVSC. Residues 55-130 enclose the Carrier domain; sequence PETVEKVSKI…EAAELIEELV (76 aa). The residue at position 90 (S90) is an O-(pantetheine 4'-phosphoryl)serine.

The protein belongs to the acyl carrier protein (ACP) family. Post-translationally, 4'-phosphopantetheine is transferred from CoA to a specific serine of apo-ACP by acpS. This modification is essential for activity because fatty acids are bound in thioester linkage to the sulfhydryl of the prosthetic group. Seed.

It localises to the plastid. It is found in the chloroplast. It functions in the pathway lipid metabolism; fatty acid biosynthesis. Functionally, carrier of the growing fatty acid chain in fatty acid biosynthesis. This chain is Acyl carrier protein, chloroplastic (ACL1.A2), found in Brassica napus (Rape).